Here is a 136-residue protein sequence, read N- to C-terminus: Large ribosomal subunit protein uL16 (136 aa).

This sequence belongs to the universal ribosomal protein uL16 family. Part of the 50S ribosomal subunit.

Its function is as follows. Binds 23S rRNA and is also seen to make contacts with the A and possibly P site tRNAs. The protein is Large ribosomal subunit protein uL16 of Shewanella baltica (strain OS155 / ATCC BAA-1091).